The chain runs to 858 residues: M-phase phosphoprotein 8 (858 aa).

The segment at 18–55 (VPDSIGRSPESEGVGAGDEEKDAATKGTVAVGDSEEDG) is disordered. 4 positions are modified to phosphoserine: Ser51, Ser85, Ser136, and Ser138. The Chromo domain maps to 59–118 (FEVERILDMKCEGGKNLYKVRWKGYTSEDDTWEPEVHLEDCKEVLLEFRKKLAENKAKAV). Residues 80-87 (WKGYTSED) form a histone H3K9me3 binding region. A disordered region spans residues 129–175 (NDIFEADSDSDQQSDTKEDISPRKKKKKIKCKEETSPEDLRKKRTKM). Thr144 is modified (phosphothreonine). Phosphoserine; by CDK1 is present on residues Ser149 and Ser164. Over residues 159–169 (CKEETSPEDLR) the composition is skewed to basic and acidic residues. The residue at position 188 (Ser188) is a Phosphoserine. Disordered stretches follow at residues 209–234 (ELKD…NKRA) and 250–300 (NRKT…DKTA). Ser267, Ser271, and Ser278 each carry phosphoserine. Over residues 273-282 (ILEDDSEDFI) the composition is skewed to acidic residues. Residues 283–300 (SDNREENQNVRSVRDKTA) are compositionally biased toward basic and acidic residues. Ser318 bears the Phosphoserine mark. Positions 321 to 431 (EDAGTRVRRK…YDLDKEEKAR (111 aa)) are disordered. Residues 335–357 (RKFEEPKEIKKLESTNAFLERRA) show a composition bias toward basic and acidic residues. Thr385 bears the Phosphothreonine; by CDK1 mark. A phosphoserine mark is found at Ser392 and Ser400. Residues 407–431 (EKEKKNEPKGKYQKRYDLDKEEKAR) are compositionally biased toward basic and acidic residues. Residue Thr453 is modified to Phosphothreonine. ANK repeat units lie at residues 598–627 (TGMT…KVNG), 631–660 (NGTT…FVNV), 664–693 (NGET…DCNI), and 697–726 (HQNS…TLSR).

As to quaternary structure, homodimer. Interacts (via chromo domain) with histone H3K9me3. Has the highest affinity for H3K9me3, and lesser affinity for H3K9me2 and H3K9me1. Component of the HUSH complex; at least composed of TASOR, PPHLN1 and MPHOSPH8. Interacts with DNMT3, EHMT1 and SETDB1. Interacts with MORC2; the interaction associateS MORC2 with the HUSH complex which recruits MORC2 to heterochromatic loci. Interacts with ZNF638; leading to recruitment of the HUSH complex to unintegrated retroviral DNA. Interacts with TASOR. In terms of processing, phosphorylated in M (mitotic) phase. Phosphorylation by CDK1 promotes dissociation from chromatin. Expressed in the spermatogonia, spermatocytes and granular cells within the cerebellum.

It localises to the nucleus. It is found in the chromosome. Its function is as follows. Heterochromatin component that specifically recognizes and binds methylated 'Lys-9' of histone H3 (H3K9me) and promotes recruitment of proteins that mediate epigenetic repression. Mediates recruitment of the HUSH complex to H3K9me3 sites: the HUSH complex is recruited to genomic loci rich in H3K9me3 and is required to maintain transcriptional silencing by promoting recruitment of SETDB1, a histone methyltransferase that mediates further deposition of H3K9me3, as well as MORC2. Binds H3K9me and promotes DNA methylation by recruiting DNMT3A to target CpG sites; these can be situated within the coding region of the gene. Mediates down-regulation of CDH1 expression. Also represses L1 retrotransposons in collaboration with MORC2 and, probably, SETDB1, the silencing is dependent of repressive epigenetic modifications, such as H3K9me3 mark. Silencing events often occur within introns of transcriptionally active genes, and lead to the down-regulation of host gene expression. The HUSH complex is also involved in the silencing of unintegrated retroviral DNA by being recruited by ZNF638: some part of the retroviral DNA formed immediately after infection remains unintegrated in the host genome and is transcriptionally repressed. The protein is M-phase phosphoprotein 8 of Mus musculus (Mouse).